The primary structure comprises 787 residues: Formate acetyltransferase (787 aa).

Residues N8 to F629 enclose the PFL domain. C416 serves as the catalytic S-acetylcysteine intermediate. Residue C417 is the Cysteine radical intermediate of the active site. One can recognise a Glycine radical domain in the interval S645–L774. G749 bears the Glycine radical mark.

It belongs to the glycyl radical enzyme (GRE) family. PFL subfamily. Homodimer.

Its subcellular location is the cytoplasm. It carries out the reaction formate + acetyl-CoA = pyruvate + CoA. The protein operates within fermentation; pyruvate fermentation; formate from pyruvate: step 1/1. In Lactococcus lactis subsp. lactis (strain IL1403) (Streptococcus lactis), this protein is Formate acetyltransferase (pfl).